Consider the following 364-residue polypeptide: Spermidine/putrescine import ATP-binding protein PotA (364 aa).

Residues 5 to 235 enclose the ABC transporter domain; that stretch reads LSFKDVSKGF…PVNRFVADFI (231 aa). Residue 37–44 participates in ATP binding; it reads GPSGCGKT.

It belongs to the ABC transporter superfamily. Spermidine/putrescine importer (TC 3.A.1.11.1) family. In terms of assembly, the complex is composed of two ATP-binding proteins (PotA), two transmembrane proteins (PotB and PotC) and a solute-binding protein (PotD).

It is found in the cell membrane. It catalyses the reaction ATP + H2O + polyamine-[polyamine-binding protein]Side 1 = ADP + phosphate + polyamineSide 2 + [polyamine-binding protein]Side 1.. Functionally, part of the ABC transporter complex PotABCD involved in spermidine/putrescine import. Responsible for energy coupling to the transport system. In Staphylococcus epidermidis (strain ATCC 12228 / FDA PCI 1200), this protein is Spermidine/putrescine import ATP-binding protein PotA.